The sequence spans 107 residues: Pyrimidine/purine nucleoside phosphorylase (107 aa).

Belongs to the nucleoside phosphorylase PpnP family.

The catalysed reaction is a purine D-ribonucleoside + phosphate = a purine nucleobase + alpha-D-ribose 1-phosphate. The enzyme catalyses adenosine + phosphate = alpha-D-ribose 1-phosphate + adenine. It carries out the reaction cytidine + phosphate = cytosine + alpha-D-ribose 1-phosphate. It catalyses the reaction guanosine + phosphate = alpha-D-ribose 1-phosphate + guanine. The catalysed reaction is inosine + phosphate = alpha-D-ribose 1-phosphate + hypoxanthine. The enzyme catalyses thymidine + phosphate = 2-deoxy-alpha-D-ribose 1-phosphate + thymine. It carries out the reaction uridine + phosphate = alpha-D-ribose 1-phosphate + uracil. It catalyses the reaction xanthosine + phosphate = alpha-D-ribose 1-phosphate + xanthine. Its function is as follows. Catalyzes the phosphorolysis of diverse nucleosides, yielding D-ribose 1-phosphate and the respective free bases. Can use uridine, adenosine, guanosine, cytidine, thymidine, inosine and xanthosine as substrates. Also catalyzes the reverse reactions. The sequence is that of Pyrimidine/purine nucleoside phosphorylase from Aromatoleum aromaticum (strain DSM 19018 / LMG 30748 / EbN1) (Azoarcus sp. (strain EbN1)).